Reading from the N-terminus, the 142-residue chain is Ribosome-binding factor A (142 aa).

Positions 119–142 (ETLGEVQSESDQPTTDETTTVNKT) are disordered. A compositionally biased stretch (polar residues) spans 123–142 (EVQSESDQPTTDETTTVNKT).

Belongs to the RbfA family. In terms of assembly, monomer. Binds 30S ribosomal subunits, but not 50S ribosomal subunits or 70S ribosomes.

The protein localises to the cytoplasm. One of several proteins that assist in the late maturation steps of the functional core of the 30S ribosomal subunit. Associates with free 30S ribosomal subunits (but not with 30S subunits that are part of 70S ribosomes or polysomes). Required for efficient processing of 16S rRNA. May interact with the 5'-terminal helix region of 16S rRNA. In Prochlorococcus marinus (strain MIT 9303), this protein is Ribosome-binding factor A.